We begin with the raw amino-acid sequence, 648 residues long: Translation factor GUF1 homolog, mitochondrial (648 aa).

The region spanning 55–247 (ERVRNFSIIA…AVIERIPSPP (193 aa)) is the tr-type G domain. GTP-binding positions include 64–71 (AHVDHGKS), 140–144 (DTPGH), and 194–197 (NKID).

It belongs to the TRAFAC class translation factor GTPase superfamily. Classic translation factor GTPase family. LepA subfamily.

It localises to the mitochondrion inner membrane. The enzyme catalyses GTP + H2O = GDP + phosphate + H(+). Promotes mitochondrial protein synthesis. May act as a fidelity factor of the translation reaction, by catalyzing a one-codon backward translocation of tRNAs on improperly translocated ribosomes. Binds to mitochondrial ribosomes in a GTP-dependent manner. The protein is Translation factor GUF1 homolog, mitochondrial of Oryza sativa subsp. indica (Rice).